An 838-amino-acid polypeptide reads, in one-letter code: Probable beta-glucosidase I (838 aa).

N-linked (GlcNAc...) asparagine glycosylation occurs at Asn-197. Asp-225 is an active-site residue. In terms of domain architecture, PA14 spans 395–555 (DGKKGFKFRV…SQEELISKAA (161 aa)). N-linked (GlcNAc...) asparagine glycosylation is present at Asn-493.

It belongs to the glycosyl hydrolase 3 family.

The protein localises to the secreted. The enzyme catalyses Hydrolysis of terminal, non-reducing beta-D-glucosyl residues with release of beta-D-glucose.. It participates in glycan metabolism; cellulose degradation. Functionally, beta-glucosidases are one of a number of cellulolytic enzymes involved in the degradation of cellulosic biomass. Catalyzes the last step releasing glucose from the inhibitory cellobiose. In Aspergillus fumigatus (strain ATCC MYA-4609 / CBS 101355 / FGSC A1100 / Af293) (Neosartorya fumigata), this protein is Probable beta-glucosidase I (bglI).